The primary structure comprises 208 residues: Protein-L-isoaspartate O-methyltransferase (208 aa).

S59 is an active-site residue.

This sequence belongs to the methyltransferase superfamily. L-isoaspartyl/D-aspartyl protein methyltransferase family.

The protein resides in the cytoplasm. It catalyses the reaction [protein]-L-isoaspartate + S-adenosyl-L-methionine = [protein]-L-isoaspartate alpha-methyl ester + S-adenosyl-L-homocysteine. Functionally, catalyzes the methyl esterification of L-isoaspartyl residues in peptides and proteins that result from spontaneous decomposition of normal L-aspartyl and L-asparaginyl residues. It plays a role in the repair and/or degradation of damaged proteins. The chain is Protein-L-isoaspartate O-methyltransferase from Pectobacterium atrosepticum (strain SCRI 1043 / ATCC BAA-672) (Erwinia carotovora subsp. atroseptica).